The primary structure comprises 463 residues: Exodeoxyribonuclease 7 large subunit (463 aa).

The protein belongs to the XseA family. In terms of assembly, heterooligomer composed of large and small subunits.

The protein resides in the cytoplasm. The enzyme catalyses Exonucleolytic cleavage in either 5'- to 3'- or 3'- to 5'-direction to yield nucleoside 5'-phosphates.. Bidirectionally degrades single-stranded DNA into large acid-insoluble oligonucleotides, which are then degraded further into small acid-soluble oligonucleotides. The sequence is that of Exodeoxyribonuclease 7 large subunit from Klebsiella pneumoniae subsp. pneumoniae (strain ATCC 700721 / MGH 78578).